The sequence spans 100 residues: Urease subunit gamma (100 aa).

It belongs to the urease gamma subunit family. Heterotrimer of UreA (gamma), UreB (beta) and UreC (alpha) subunits. Three heterotrimers associate to form the active enzyme.

It localises to the cytoplasm. The enzyme catalyses urea + 2 H2O + H(+) = hydrogencarbonate + 2 NH4(+). Its pathway is nitrogen metabolism; urea degradation; CO(2) and NH(3) from urea (urease route): step 1/1. In Cupriavidus necator (strain ATCC 17699 / DSM 428 / KCTC 22496 / NCIMB 10442 / H16 / Stanier 337) (Ralstonia eutropha), this protein is Urease subunit gamma.